Reading from the N-terminus, the 400-residue chain is Probable cysteine protease atg4 (400 aa).

Cys-131 functions as the Nucleophile in the catalytic mechanism. Active-site residues include Asp-305 and His-307.

It belongs to the peptidase C54 family.

The protein localises to the cytoplasm. Its subcellular location is the nucleus. It is found in the preautophagosomal structure. The enzyme catalyses [protein]-C-terminal L-amino acid-glycyl-phosphatidylethanolamide + H2O = [protein]-C-terminal L-amino acid-glycine + a 1,2-diacyl-sn-glycero-3-phosphoethanolamine. In terms of biological role, cysteine protease that plays a key role in cytoplasm to vacuole transport (Cvt) and autophagy by mediating both proteolytic activation and delipidation of ATG8. Required for selective autophagic degradation of the nucleus (nucleophagy) as well as for mitophagy which contributes to regulate mitochondrial quantity and quality by eliminating the mitochondria to a basal level to fulfill cellular energy requirements and preventing excess ROS production. The protease activity is required for proteolytic activation of ATG8: cleaves the C-terminal amino acid of ATG8 to reveal a C-terminal glycine. ATG8 ubiquitin-like activity requires the exposure of the glycine at the C-terminus for its conjugation to phosphatidylethanolamine (PE) and its insertion to membranes, which is necessary for autophagy. The ATG8-PE conjugate mediates tethering between adjacent membranes and stimulates membrane hemifusion, leading to expansion of the autophagosomal membrane during autophagy. In addition to the protease activity, also catalyzes deconjugation of PE-conjugated forms of ATG8 during macroautophagy: ATG8 delipidation is required to release the protein from membranes, which facilitates multiple events during macroautophagy, and especially for efficient autophagosome biogenesis, the assembly of ATG9-containing tubulovesicular clusters into phagophores/autophagosomes, and for the disassembly of PAS-associated ATG components. ATG8 delipidation by ATG4 also recycles ATG8-PE generated on inappropriate membranes to maintain a reservoir of unlipidated ATG8 that is required for autophagosome formation at the PAS. The chain is Probable cysteine protease atg4 (atg4) from Aspergillus clavatus (strain ATCC 1007 / CBS 513.65 / DSM 816 / NCTC 3887 / NRRL 1 / QM 1276 / 107).